A 378-amino-acid chain; its full sequence is Dual-specificity RNA methyltransferase RlmN (378 aa).

Glu-97 (proton acceptor) is an active-site residue. One can recognise a Radical SAM core domain in the interval 103 to 341 (EGDRATLCVS…VMVRKTRGDD (239 aa)). A disulfide bridge connects residues Cys-110 and Cys-346. Residues Cys-117, Cys-121, and Cys-124 each contribute to the [4Fe-4S] cluster site. S-adenosyl-L-methionine contacts are provided by residues 171-172 (GE), Ser-203, 225-227 (SLH), and Asn-303. Catalysis depends on Cys-346, which acts as the S-methylcysteine intermediate.

Belongs to the radical SAM superfamily. RlmN family. [4Fe-4S] cluster is required as a cofactor.

Its subcellular location is the cytoplasm. The catalysed reaction is adenosine(2503) in 23S rRNA + 2 reduced [2Fe-2S]-[ferredoxin] + 2 S-adenosyl-L-methionine = 2-methyladenosine(2503) in 23S rRNA + 5'-deoxyadenosine + L-methionine + 2 oxidized [2Fe-2S]-[ferredoxin] + S-adenosyl-L-homocysteine. It catalyses the reaction adenosine(37) in tRNA + 2 reduced [2Fe-2S]-[ferredoxin] + 2 S-adenosyl-L-methionine = 2-methyladenosine(37) in tRNA + 5'-deoxyadenosine + L-methionine + 2 oxidized [2Fe-2S]-[ferredoxin] + S-adenosyl-L-homocysteine. Specifically methylates position 2 of adenine 2503 in 23S rRNA and position 2 of adenine 37 in tRNAs. m2A2503 modification seems to play a crucial role in the proofreading step occurring at the peptidyl transferase center and thus would serve to optimize ribosomal fidelity. The polypeptide is Dual-specificity RNA methyltransferase RlmN (Idiomarina loihiensis (strain ATCC BAA-735 / DSM 15497 / L2-TR)).